Reading from the N-terminus, the 298-residue chain is Elongation factor Ts (298 aa).

The segment at 80 to 83 (TDFV) is involved in Mg(2+) ion dislocation from EF-Tu.

It belongs to the EF-Ts family.

The protein localises to the cytoplasm. Its function is as follows. Associates with the EF-Tu.GDP complex and induces the exchange of GDP to GTP. It remains bound to the aminoacyl-tRNA.EF-Tu.GTP complex up to the GTP hydrolysis stage on the ribosome. The sequence is that of Elongation factor Ts from Acidovorax sp. (strain JS42).